We begin with the raw amino-acid sequence, 202 residues long: Tetranectin (202 aa).

A signal peptide spans 1–21 (MELWGPCVLLCLFSLLTQVTA). Disulfide bonds link Cys-71–Cys-81, Cys-98–Cys-197, and Cys-173–Cys-189. One can recognise a C-type lectin domain in the interval 77 to 198 (VHMKCFLAFV…CRDKLPYVCQ (122 aa)).

In terms of assembly, homotrimer.

The protein localises to the secreted. In terms of biological role, tetranectin binds to plasminogen and to isolated kringle 4. May be involved in the packaging of molecules destined for exocytosis. Plays a role in retinal function. This Bos taurus (Bovine) protein is Tetranectin (CLEC3B).